A 125-amino-acid polypeptide reads, in one-letter code: MORF4 family-associated protein 1 (125 aa).

A disordered region spans residues 76–99 (ESALNHLQGAGGAEPRGPRAEKAD). Residues 94–124 (RAEKADEKAQEMAKMAEMLVQLVRRIEKSES) adopt a coiled-coil conformation.

The protein belongs to the MORF4 family-associated protein family. As to quaternary structure, found in a complex composed of MORF4L1, MRFAP1 and RB1. Interacts via its N-terminus with MORF4L1. Interacts with CSTB and MORF4L2.

The protein resides in the nucleus. The protein localises to the cytoplasm. Its subcellular location is the perinuclear region. The protein is MORF4 family-associated protein 1 of Rattus norvegicus (Rat).